The primary structure comprises 42 residues: Alpha-conotoxin VnIB (42 aa).

Positions 1-22 are excised as a propeptide; sequence ASDGRNAAADDKASDPIALTVR. 2 cysteine pairs are disulfide-bonded: cysteine 25-cysteine 31 and cysteine 26-cysteine 38. Residue glycine 39 is modified to Glycine amide.

This sequence belongs to the conotoxin A superfamily. In terms of tissue distribution, expressed by the venom duct.

The protein resides in the secreted. Its function is as follows. Alpha-conotoxins act on postsynaptic membranes, they bind to the nicotinic acetylcholine receptors (nAChR) and thus inhibit them. This toxin potently and selectively inhibits human and rat alpha-6-beta-4/CHRNA6-CHRNB4 nAChR (IC(50)=12 nM on rat nAChR). It exhibits rapid binding and unbinding at this receptor. It also shows activity on rat alpha-6-beta-4/CHRNA6-CHRNB4 (IC(50)=12 nM), human alpha-6/alpha-3-beta-4 (CHRNA6/CHRNA3-CHRNB4) (IC(50)=5.3 nM), rat alpha-6/alpha-3-beta-4 (CHRNA6/CHRNA3-CHRNB4) (IC(50)=18 nM), rat alpha-3-beta-4/CHRNA3-CHRNB4 (IC(50)=320 nM), and rat alpha-6/alpha-3-beta-2-beta-3 (CHRNA6/CHRNA3-CHRNB2-CHRNB3) (IC(50)=4 uM). The polypeptide is Alpha-conotoxin VnIB (Conus ventricosus (Mediterranean cone)).